We begin with the raw amino-acid sequence, 299 residues long: Transcription elongation factor A protein 2 (299 aa).

The region spanning 6–83 (EEIARIARRL…KSWKKLLDAS (78 aa)) is the TFIIS N-terminal domain. Residue lysine 58 forms a Glycyl lysine isopeptide (Lys-Gly) (interchain with G-Cter in ubiquitin) linkage. A phosphoserine mark is found at serine 60 and serine 100. Residues 86–128 (KARERGRGMPLPTSSRDASEAPDPSRKRPELPRAPSTPRITTF) are disordered. Residues 102-116 (DASEAPDPSRKRPEL) show a composition bias toward basic and acidic residues. Residues 138–254 (VRNKCREMLT…EHQMARTGGT (117 aa)) form the TFIIS central domain. The TFIIS-type zinc-finger motif lies at 257–297 (DLFTCGKCRKKNCTYTQVQTRSSDEPMTTFVVCNECGNRWK). 4 residues coordinate Zn(2+): cysteine 261, cysteine 264, cysteine 289, and cysteine 292.

This sequence belongs to the TFS-II family. In terms of assembly, interacts with the basal transcription factor GTF2B. Interacts with REXO1. Testis and ovary specific.

It localises to the nucleus. Its function is as follows. Necessary for efficient RNA polymerase II transcription elongation past template-encoded arresting sites. The arresting sites in DNA have the property of trapping a certain fraction of elongating RNA polymerases that pass through, resulting in locked ternary complexes. Cleavage of the nascent transcript by S-II allows the resumption of elongation from the new 3'-terminus. The protein is Transcription elongation factor A protein 2 (TCEA2) of Homo sapiens (Human).